A 230-amino-acid chain; its full sequence is Orotidine 5'-phosphate decarboxylase (230 aa).

Residues Asp-10, Lys-32, 59–68, Thr-118, Arg-179, Gln-188, Gly-208, and Arg-209 each bind substrate; that span reads DLKLHDIPNT. The active-site Proton donor is the Lys-61.

It belongs to the OMP decarboxylase family. Type 1 subfamily. Homodimer.

It carries out the reaction orotidine 5'-phosphate + H(+) = UMP + CO2. It participates in pyrimidine metabolism; UMP biosynthesis via de novo pathway; UMP from orotate: step 2/2. In terms of biological role, catalyzes the decarboxylation of orotidine 5'-monophosphate (OMP) to uridine 5'-monophosphate (UMP). This Opitutus terrae (strain DSM 11246 / JCM 15787 / PB90-1) protein is Orotidine 5'-phosphate decarboxylase.